A 319-amino-acid chain; its full sequence is Olfactory receptor 8U3 (319 aa).

The Extracellular portion of the chain corresponds to 1-25 (MAEVNISYVSEFILKGITDRPELQA). Asparagine 5 carries N-linked (GlcNAc...) asparagine glycosylation. Residues 26-46 (PCFVMFLTIYLVTVLGNLGLI) form a helical membrane-spanning segment. Residues 47–54 (VIIRVDSR) are Cytoplasmic-facing. A helical transmembrane segment spans residues 55–75 (LHTPMYFFLSHLAFVDLCYSS). At 76–99 (AITPKMMVNFVVERNTIPFHACAT) the chain is on the extracellular side. Cysteines 97 and 189 form a disulfide. The helical transmembrane segment at 100–120 (QLGCFLTFMITECFLLASMAY) threads the bilayer. The Cytoplasmic segment spans residues 121–133 (DRYVAICSPLHYS). A helical transmembrane segment spans residues 134–154 (TLMSKRVCIQLVAVPYVYSFL). Topologically, residues 155 to 196 (VALFHTIITFRLTYCGPNVINHFYCDDLPLLALSCSDTHMKE) are extracellular. The chain crosses the membrane as a helical span at residues 197–217 (ILIFAFAGFDMICSSSIVLTS). The Cytoplasmic portion of the chain corresponds to 218–237 (YLFIIAAILRIRSTQGRRKA). The chain crosses the membrane as a helical span at residues 238-258 (ISTCGSHMVAVTIFYGTLIFM). Topologically, residues 259-271 (YLQPKSNHSLDTD) are extracellular. Asparagine 265 carries an N-linked (GlcNAc...) asparagine glycan. A helical membrane pass occupies residues 272–292 (KMASVFYTVVIPMLNPLIYSL). The Cytoplasmic segment spans residues 293–319 (RNKEVKDASKKALDKGYETLKILRLSK).

The protein belongs to the G-protein coupled receptor 1 family.

Its subcellular location is the cell membrane. Functionally, potential odorant receptor. The chain is Olfactory receptor 8U3 from Mus musculus (Mouse).